The chain runs to 355 residues: MIETDKLAAERIIAATPTSSHEEVFERALRPRQLDDYVGQEKVRGQLEIFIEAAKRRSEPLDHVLLFGPPGLGKTTLAHIIAREMGVNLRQTSGPVLERAGDLAALLTNLEANDVLFIDEIHRLSPVVEEILYPALEDYQIDIMIGEGPAARSVKLDLQPFTLVGATTRAGMLTNPLRDRFGIVARLEFYDADQLARIVRRSASLLNAHIDPSGALEIAKRSRGTPRIANRLLRRVRDFAEVKADGQITAAVADAALAMLDVDPVGFDLMDRKLLEAILHKFDGGPVGIDNLAAAIGEERDTIEDVLEPYLIQQGFLQRTPRGRVATLLTYRHFGLSAPDAGNAERGMWDTPAGK.

Residues 4 to 190 (TDKLAAERII…FGIVARLEFY (187 aa)) form a large ATPase domain (RuvB-L) region. ATP is bound by residues L29, R30, G71, K74, T75, T76, 137 to 139 (EDY), R180, Y190, and R227. T75 is a Mg(2+) binding site. The tract at residues 191–261 (DADQLARIVR…VADAALAMLD (71 aa)) is small ATPAse domain (RuvB-S). The segment at 264–355 (PVGFDLMDRK…RGMWDTPAGK (92 aa)) is head domain (RuvB-H). Positions 300, 319, and 324 each coordinate DNA.

Belongs to the RuvB family. As to quaternary structure, homohexamer. Forms an RuvA(8)-RuvB(12)-Holliday junction (HJ) complex. HJ DNA is sandwiched between 2 RuvA tetramers; dsDNA enters through RuvA and exits via RuvB. An RuvB hexamer assembles on each DNA strand where it exits the tetramer. Each RuvB hexamer is contacted by two RuvA subunits (via domain III) on 2 adjacent RuvB subunits; this complex drives branch migration. In the full resolvosome a probable DNA-RuvA(4)-RuvB(12)-RuvC(2) complex forms which resolves the HJ.

The protein resides in the cytoplasm. The enzyme catalyses ATP + H2O = ADP + phosphate + H(+). Its function is as follows. The RuvA-RuvB-RuvC complex processes Holliday junction (HJ) DNA during genetic recombination and DNA repair, while the RuvA-RuvB complex plays an important role in the rescue of blocked DNA replication forks via replication fork reversal (RFR). RuvA specifically binds to HJ cruciform DNA, conferring on it an open structure. The RuvB hexamer acts as an ATP-dependent pump, pulling dsDNA into and through the RuvAB complex. RuvB forms 2 homohexamers on either side of HJ DNA bound by 1 or 2 RuvA tetramers; 4 subunits per hexamer contact DNA at a time. Coordinated motions by a converter formed by DNA-disengaged RuvB subunits stimulates ATP hydrolysis and nucleotide exchange. Immobilization of the converter enables RuvB to convert the ATP-contained energy into a lever motion, pulling 2 nucleotides of DNA out of the RuvA tetramer per ATP hydrolyzed, thus driving DNA branch migration. The RuvB motors rotate together with the DNA substrate, which together with the progressing nucleotide cycle form the mechanistic basis for DNA recombination by continuous HJ branch migration. Branch migration allows RuvC to scan DNA until it finds its consensus sequence, where it cleaves and resolves cruciform DNA. The protein is Holliday junction branch migration complex subunit RuvB of Burkholderia ambifaria (strain ATCC BAA-244 / DSM 16087 / CCUG 44356 / LMG 19182 / AMMD) (Burkholderia cepacia (strain AMMD)).